The sequence spans 346 residues: Phenylalanine--tRNA ligase alpha subunit (346 aa).

Glutamate 261 contacts Mg(2+).

The protein belongs to the class-II aminoacyl-tRNA synthetase family. Phe-tRNA synthetase alpha subunit type 1 subfamily. As to quaternary structure, tetramer of two alpha and two beta subunits. Requires Mg(2+) as cofactor.

The protein localises to the cytoplasm. It catalyses the reaction tRNA(Phe) + L-phenylalanine + ATP = L-phenylalanyl-tRNA(Phe) + AMP + diphosphate + H(+). The polypeptide is Phenylalanine--tRNA ligase alpha subunit (Dehalococcoides mccartyi (strain ATCC BAA-2100 / JCM 16839 / KCTC 5957 / BAV1)).